The sequence spans 599 residues: Riboflavin biosynthesis protein PYRR, chloroplastic (599 aa).

The N-terminal 17 residues, 1–17 (MALSFRISSSSPLICRA), are a transit peptide targeting the chloroplast. Positions 30 to 152 (TTDAAFIRRA…ELRSHGIEVN (123 aa)) constitute a CMP/dCMP-type deaminase domain.

The protein in the C-terminal section; belongs to the YbiA family.

It localises to the plastid. The protein localises to the chloroplast. The enzyme catalyses 5-amino-6-(5-phospho-D-ribitylamino)uracil + NADP(+) = 5-amino-6-(5-phospho-D-ribosylamino)uracil + NADPH + H(+). The catalysed reaction is 2,5-diamino-6-hydroxy-4-(5-phosphoribosylamino)-pyrimidine + H2O = 2,5,6-triamino-4-hydroxypyrimidine + D-ribose 5-phosphate. It catalyses the reaction 5-amino-6-(5-phospho-D-ribosylamino)uracil + H2O = 5,6-diaminouracil + D-ribose 5-phosphate. Its pathway is cofactor biosynthesis; riboflavin biosynthesis; 5-amino-6-(D-ribitylamino)uracil from GTP: step 3/4. Pyrimidine reductase involved in the riboflavin biosynthesis pathway. Also has a non-functional N-terminal deaminase domain that lacks the catalytically essential zinc-binding residues. In terms of biological role, catalyzes the hydrolysis of the N-glycosidic bond in the first two intermediates of riboflavin biosynthesis, which are highly reactive metabolites, yielding relatively innocuous products. Thus, can divert a surplus of harmful intermediates into relatively harmless products and pre-empt the damage these intermediates would otherwise do. Helps maintain flavin levels. Has no activity against GTP, nucleoside monophosphates or ADP-ribose. This Arabidopsis thaliana (Mouse-ear cress) protein is Riboflavin biosynthesis protein PYRR, chloroplastic (PYRR).